We begin with the raw amino-acid sequence, 892 residues long: Gamma-tubulin small complex component GCP3 (892 aa).

It belongs to the TUBGCP family. Component of the gamma-tubulin small complex (gamma-TuSC) composed of tubulin gamma chain, gamma-tubulin complex protein 2 (GCP2) and gamma-tubulin complex protein 3 (GCP3). Interacts with tubulin gamma chain.

It is found in the cytoplasm. Its subcellular location is the cytoskeleton. It localises to the flagellum axoneme. The protein localises to the flagellum basal body. Functionally, component of the gamma-tubulin small complex (gamma-TuSC) involved in microtubule (MT) nucleation for the formation of median bodies and in the biogenesis of flagella. Gamma-TuSC may be required for the correct positioning of EB1 within the trophozoites. The protein is Gamma-tubulin small complex component GCP3 of Giardia intestinalis (strain ATCC 50803 / WB clone C6) (Giardia lamblia).